The primary structure comprises 580 residues: M-phase inducer phosphatase 2 (580 aa).

The segment at 1–24 (MEVPQPEPAPGSALSPAGVCGGAQ) is disordered. The residue at position 42 (serine 42) is a Phosphoserine. Positions 89–107 (SLSRRASESSLSSESSESS) are enriched in low complexity. Disordered regions lie at residues 89–117 (SLSRRASESSLSSESSESSDAGLCMDSPS) and 165–196 (NITNSQAPDGRRKSEAGSGAASSSGEDKENDG). Serine 169 is modified (phosphoserine; by MELK). Serine 249 is modified (phosphoserine). A Phosphoserine; by MELK and MAPK14 modification is found at serine 323. Residues 331–370 (PILKRLERPQDRDTPVQNKRRRSVTPPEEQQEAEEPKARV) are disordered. A compositionally biased stretch (basic and acidic residues) spans 334–344 (KRLERPQDRDT). The residue at position 353 (serine 353) is a Phosphoserine; by AURKA. A Phosphoserine; by BRSK1 and MAPK14 modification is found at serine 375. The region spanning 431–538 (IVDKFVIVDC…FFPQHPNFCE (108 aa)) is the Rhodanese domain. Serine 470 is modified (phosphoserine). The active site involves cysteine 487. Serine 563 is subject to Phosphoserine.

It belongs to the MPI phosphatase family. As to quaternary structure, interacts with MAPK14 and 14-3-3 proteins. Phosphorylated by BRSK1 in vitro. Phosphorylated by CHEK1, which inhibits the activity of this protein. Phosphorylation at Ser-353 by AURKA might locally participate in the control of the onset of mitosis. Phosphorylation by MELK at Ser-169 promotes localization to the centrosome and the spindle poles during mitosis. Phosphorylation at Ser-323 and Ser-375 by MAPK14 is required for binding to 14-3-3 proteins.

The protein localises to the cytoplasm. Its subcellular location is the cytoskeleton. It is found in the microtubule organizing center. It localises to the centrosome. The protein resides in the spindle pole. It catalyses the reaction O-phospho-L-tyrosyl-[protein] + H2O = L-tyrosyl-[protein] + phosphate. Its activity is regulated as follows. Stimulated by B-type cyclins. Its function is as follows. Tyrosine protein phosphatase which functions as a dosage-dependent inducer of mitotic progression. Directly dephosphorylates CDK1 and stimulates its kinase activity. Required for G2/M phases of the cell cycle progression and abscission during cytokinesis in a ECT2-dependent manner. The three isoforms seem to have a different level of activity. The chain is M-phase inducer phosphatase 2 (CDC25B) from Homo sapiens (Human).